Here is a 420-residue protein sequence, read N- to C-terminus: Putative transporter AmpG 3 (420 aa).

12 helical membrane-spanning segments follow: residues 6-26 (YLIG…LIFF), 41-61 (IVGS…WSPF), 79-99 (GWAL…LKRS), 104-124 (LCIT…QDIV), 141-161 (IAFT…SVGA), 166-186 (IIFG…VGPI), 230-250 (LLLI…PMAM), 274-294 (LLIM…IGIF), 297-317 (VLIG…LATI), 324-344 (FIIT…IISI), 359-381 (YSIS…GICA), and 386-406 (WPVF…IFYI).

This sequence belongs to the major facilitator superfamily.

The protein resides in the cell inner membrane. The sequence is that of Putative transporter AmpG 3 (ampG3) from Rickettsia typhi (strain ATCC VR-144 / Wilmington).